A 315-amino-acid chain; its full sequence is MTTYDPSQKSLGKEKLSRIPVKIEATHTPLRKPDWIRIRLSTDSKVSQLKKLLRENHLVTVCEEASCPNLNECFGHGTATFMIMGDKCTRRCSFCDVGHGRPDPLDPEEPVNLANTVSIMSLRYVVITSVDRDDLRDGGAQHYAQCINAVREKNPGIKVEVLVPDFRGRMEKALDQLAQGLPDVFNHNIETAPRLYKQARPGADYPWSLALLQTFKKRFPGIPTKSGMMLGLGETREEVETVMRDLRQHEVDRLTLGQYLQPTRYHMPVDRYVTPQEFQELGELAKKLGFSNVASGPLVRSSYHADLQAQGERVS.

[4Fe-4S] cluster-binding residues include C62, C67, C73, C88, C92, C95, and S302. Positions 73-291 (CFGHGTATFM…GELAKKLGFS (219 aa)) constitute a Radical SAM core domain.

Belongs to the radical SAM superfamily. Lipoyl synthase family. [4Fe-4S] cluster serves as cofactor.

It is found in the cytoplasm. It catalyses the reaction [[Fe-S] cluster scaffold protein carrying a second [4Fe-4S](2+) cluster] + N(6)-octanoyl-L-lysyl-[protein] + 2 oxidized [2Fe-2S]-[ferredoxin] + 2 S-adenosyl-L-methionine + 4 H(+) = [[Fe-S] cluster scaffold protein] + N(6)-[(R)-dihydrolipoyl]-L-lysyl-[protein] + 4 Fe(3+) + 2 hydrogen sulfide + 2 5'-deoxyadenosine + 2 L-methionine + 2 reduced [2Fe-2S]-[ferredoxin]. It functions in the pathway protein modification; protein lipoylation via endogenous pathway; protein N(6)-(lipoyl)lysine from octanoyl-[acyl-carrier-protein]: step 2/2. Its function is as follows. Catalyzes the radical-mediated insertion of two sulfur atoms into the C-6 and C-8 positions of the octanoyl moiety bound to the lipoyl domains of lipoate-dependent enzymes, thereby converting the octanoylated domains into lipoylated derivatives. In Coxiella burnetii (strain Dugway 5J108-111), this protein is Lipoyl synthase.